The chain runs to 487 residues: uncharacterized protein (487 aa).

Belongs to the UbiD family.

This is an uncharacterized protein from Aeropyrum pernix (strain ATCC 700893 / DSM 11879 / JCM 9820 / NBRC 100138 / K1).